The sequence spans 334 residues: ADP-L-glycero-D-manno-heptose-6-epimerase (334 aa).

NADP(+) contacts are provided by residues phenylalanine 11 to isoleucine 12, aspartate 32 to asparagine 33, lysine 39, lysine 54, glutamine 77 to serine 81, and asparagine 94. Catalysis depends on tyrosine 141, which acts as the Proton acceptor. Lysine 145 is a binding site for NADP(+). Asparagine 171 contributes to the substrate binding site. Residues valine 172 and lysine 180 each coordinate NADP(+). Lysine 180 functions as the Proton acceptor in the catalytic mechanism. Residues arginine 182, histidine 189, phenylalanine 203–asparagine 206, arginine 216, and tyrosine 295 contribute to the substrate site.

The protein belongs to the NAD(P)-dependent epimerase/dehydratase family. HldD subfamily. In terms of assembly, homopentamer. NADP(+) is required as a cofactor.

It carries out the reaction ADP-D-glycero-beta-D-manno-heptose = ADP-L-glycero-beta-D-manno-heptose. It participates in nucleotide-sugar biosynthesis; ADP-L-glycero-beta-D-manno-heptose biosynthesis; ADP-L-glycero-beta-D-manno-heptose from D-glycero-beta-D-manno-heptose 7-phosphate: step 4/4. It functions in the pathway bacterial outer membrane biogenesis; LOS core biosynthesis. Functionally, catalyzes the interconversion between ADP-D-glycero-beta-D-manno-heptose and ADP-L-glycero-beta-D-manno-heptose via an epimerization at carbon 6 of the heptose. The polypeptide is ADP-L-glycero-D-manno-heptose-6-epimerase (Neisseria gonorrhoeae).